A 1192-amino-acid chain; its full sequence is ATP-dependent helicase/deoxyribonuclease subunit B (1192 aa).

The protein belongs to the helicase family. AddB/RexB type 2 subfamily. In terms of assembly, heterodimer of AddA and RexB. The cofactor is Mg(2+).

The heterodimer acts as both an ATP-dependent DNA helicase and an ATP-dependent, dual-direction single-stranded exonuclease. Recognizes the chi site generating a DNA molecule suitable for the initiation of homologous recombination. This subunit has 5' -&gt; 3' nuclease activity but not helicase activity. The chain is ATP-dependent helicase/deoxyribonuclease subunit B from Pediococcus pentosaceus (strain ATCC 25745 / CCUG 21536 / LMG 10740 / 183-1w).